Here is a 230-residue protein sequence, read N- to C-terminus: Androgen-dependent TFPI-regulating protein (230 aa).

At 1–7 (MTKTTTC) the chain is on the cytoplasmic side. The helical transmembrane segment at 8 to 28 (VYHFLVLNWYIFLNYHIPQIG) threads the bilayer. Residues 29–45 (RNEEKLREFHDGGRSKY) are Extracellular-facing. The helical transmembrane segment at 46–66 (LTLLNLLLQAIFFGVACLDDV) threads the bilayer. The Cytoplasmic segment spans residues 67-85 (LKRVIGRKDIKFVTSFRDL). The chain crosses the membrane as a helical span at residues 86–106 (LFTTMAFPISTFVFLVFWTLF). Over 107-120 (HYDRSLVYPKGLDD) the chain is Extracellular. The helical transmembrane segment at 121–141 (FFPAWVNHAMHTSIFPFSLFE) threads the bilayer. Residues 142–154 (TILRPHNYPSKKL) are Cytoplasmic-facing. The chain crosses the membrane as a helical span at residues 155–175 (GLTLLGAFNFAYIIRILWRYV). Over 176–190 (QTGNWVYPVFDSLSP) the chain is Extracellular. A helical membrane pass occupies residues 191–211 (LGIIIFFSAAYILVAGIYLFG). The Cytoplasmic segment spans residues 212–230 (EKINHWKWGAIAKPQMKKN).

This sequence belongs to the AIG1 family.

It is found in the cell membrane. It carries out the reaction 9-hexadecanoyloxy-octadecanoate + H2O = 9-hydroxy-octadecanoate + hexadecanoate + H(+). The catalysed reaction is 12-hexadecanoyloxy-octadecanoate + H2O = 12-hydroxyoctadecanoate + hexadecanoate + H(+). It catalyses the reaction 9-(9Z-hexadecenoyloxy)-octadecanoate + H2O = (9Z)-hexadecenoate + 9-hydroxy-octadecanoate + H(+). The enzyme catalyses 12-(9Z-hexadecenoyloxy)-octadecanoate + H2O = 12-hydroxyoctadecanoate + (9Z)-hexadecenoate + H(+). It carries out the reaction 13-(9Z-hexadecenoyloxy)-octadecanoate + H2O = 13-hydroxy-octadecanoate + (9Z)-hexadecenoate + H(+). The catalysed reaction is 9-octadecanoyloxy-octadecanoate + H2O = 9-hydroxy-octadecanoate + octadecanoate + H(+). It catalyses the reaction 12-octadecanoyloxy-octadecanoate + H2O = 12-hydroxyoctadecanoate + octadecanoate + H(+). The enzyme catalyses 13-octadecanoyloxy-octadecanoate + H2O = 13-hydroxy-octadecanoate + octadecanoate + H(+). It carries out the reaction 9-(9Z-octadecenoyloxy)-octadecanoate + H2O = 9-hydroxy-octadecanoate + (9Z)-octadecenoate + H(+). The catalysed reaction is 12-(9Z-octadecenoyloxy)-octadecanoate + H2O = 12-hydroxyoctadecanoate + (9Z)-octadecenoate + H(+). It catalyses the reaction 13-(9Z-octadecenoyloxy)-octadecanoate + H2O = 13-hydroxy-octadecanoate + (9Z)-octadecenoate + H(+). The enzyme catalyses 5-(9Z-octadecenoyloxy)-octadecanoate + H2O = 5-hydroxy-octadecanoate + (9Z)-octadecenoate + H(+). Hydrolyzes bioactive fatty-acid esters of hydroxy-fatty acids (FAHFAs), but not other major classes of lipids. Shows a preference for FAHFAs with branching distal from the carboxylate head group of the lipids. Regulates the expression and the cell-associated anticoagulant activity of the inhibitor TFPI in endothelial cells (in vitro). In Mus musculus (Mouse), this protein is Androgen-dependent TFPI-regulating protein (Adtrp).